Here is a 61-residue protein sequence, read N- to C-terminus: Small ribosomal subunit protein uS14B (61 aa).

Cysteine 24, cysteine 27, cysteine 40, and cysteine 43 together coordinate Zn(2+).

The protein belongs to the universal ribosomal protein uS14 family. Zinc-binding uS14 subfamily. In terms of assembly, part of the 30S ribosomal subunit. Contacts proteins S3 and S10. Zn(2+) is required as a cofactor.

Its function is as follows. Binds 16S rRNA, required for the assembly of 30S particles and may also be responsible for determining the conformation of the 16S rRNA at the A site. This chain is Small ribosomal subunit protein uS14B, found in Salinispora arenicola (strain CNS-205).